The sequence spans 269 residues: Iron(3+)-hydroxamate import ATP-binding protein FhuC (269 aa).

An ABC transporter domain is found at 4-240; that stretch reads LSTEQLGIGY…DILKQVFQID (237 aa). ATP-binding positions include 36-43 and 160-171; these read GPNGCGKS and LLLLDEPTTYLD.

It belongs to the ABC transporter superfamily. Iron (Fe3+)-hydroxamate importer (TC 3.A.1.14.7) family. In terms of assembly, the complex is composed of an ATP-binding protein (FhuC), two transmembrane proteins (FhuB and FhuG) and a solute-binding protein (FhuD or YxeB).

It localises to the cell membrane. The enzyme catalyses ATP + H2O + Fe(3+)-hydroxamate complex-[hydroxamate-binding protein]Side 1 = ADP + phosphate + Fe(3+)-hydroxamate complexSide 2 + [hydroxamate-binding protein]Side 1.. Part of the ABC transporter complex FhuBGCD involved in iron(3+)-hydroxamate import. Responsible for energy coupling to the transport system. The protein is Iron(3+)-hydroxamate import ATP-binding protein FhuC (fhuC) of Bacillus subtilis (strain 168).